Consider the following 317-residue polypeptide: ADP-L-glycero-D-manno-heptose-6-epimerase (317 aa).

Residues 10–11 (FI), 31–32 (DD), Q38, K53, 75–79 (QGACS), and N92 each bind NADP(+). Residue Y139 is the Proton acceptor of the active site. K143 is a binding site for NADP(+). N166 provides a ligand contact to substrate. NADP(+) is bound by residues V167 and K175. K175 acts as the Proton acceptor in catalysis. Substrate is bound by residues G177, H184, 198–201 (FEGV), R211, and Y275.

The protein belongs to the NAD(P)-dependent epimerase/dehydratase family. HldD subfamily. Homopentamer. The cofactor is NADP(+).

The catalysed reaction is ADP-D-glycero-beta-D-manno-heptose = ADP-L-glycero-beta-D-manno-heptose. The protein operates within nucleotide-sugar biosynthesis; ADP-L-glycero-beta-D-manno-heptose biosynthesis; ADP-L-glycero-beta-D-manno-heptose from D-glycero-beta-D-manno-heptose 7-phosphate: step 4/4. In terms of biological role, catalyzes the interconversion between ADP-D-glycero-beta-D-manno-heptose and ADP-L-glycero-beta-D-manno-heptose via an epimerization at carbon 6 of the heptose. This chain is ADP-L-glycero-D-manno-heptose-6-epimerase, found in Shewanella frigidimarina (strain NCIMB 400).